A 101-amino-acid polypeptide reads, in one-letter code: NAD(P)H-quinone oxidoreductase subunit 4L (101 aa).

A run of 3 helical transmembrane segments spans residues 3 to 23 (LQYF…GLVT), 30 to 50 (VLMS…AFSN), and 64 to 84 (IFVI…VLAI).

Belongs to the complex I subunit 4L family. As to quaternary structure, NDH-1 can be composed of about 15 different subunits; different subcomplexes with different compositions have been identified which probably have different functions.

The protein localises to the cellular thylakoid membrane. It catalyses the reaction a plastoquinone + NADH + (n+1) H(+)(in) = a plastoquinol + NAD(+) + n H(+)(out). It carries out the reaction a plastoquinone + NADPH + (n+1) H(+)(in) = a plastoquinol + NADP(+) + n H(+)(out). NDH-1 shuttles electrons from an unknown electron donor, via FMN and iron-sulfur (Fe-S) centers, to quinones in the respiratory and/or the photosynthetic chain. The immediate electron acceptor for the enzyme in this species is believed to be plastoquinone. Couples the redox reaction to proton translocation, and thus conserves the redox energy in a proton gradient. Cyanobacterial NDH-1 also plays a role in inorganic carbon-concentration. In Leptolyngbya boryana (Plectonema boryanum), this protein is NAD(P)H-quinone oxidoreductase subunit 4L.